Here is a 1098-residue protein sequence, read N- to C-terminus: Gramicidin S synthase 1 (1098 aa).

Positions 538-612 (APRNEIEETL…QLVHYIKDSK (75 aa)) constitute a Carrier domain. Position 573 is an O-(pantetheine 4'-phosphoryl)serine (Ser-573).

It belongs to the ATP-dependent AMP-binding enzyme family. Large multienzyme complex of GrsA and GrsB. Pantetheine 4'-phosphate serves as cofactor.

The catalysed reaction is L-phenylalanine + ATP + H2O = D-phenylalanine + AMP + diphosphate + H(+). It participates in antibiotic biosynthesis; gramicidin S biosynthesis. Functionally, in the first step of peptide synthesis this enzyme activates phenylalanine and racemizes it to the D-isomer. This chain is Gramicidin S synthase 1 (grsA), found in Brevibacillus brevis (Bacillus brevis).